The primary structure comprises 521 residues: MDSPSGPRVLSSLTQDPSFTTSPALQGIWNGTQNVSVRAQLLSVSPTTSAHQAAAWVPFPTVDVPDHAHYTLGTVILLVGLTGMLGNLTVIYTFCRNRGLRTPANMFIINLAVSDFLMSVTQAPVFFASSLYKKWLFGETGCEFYAFCGAVFGITSMITLTAIAMDRYLVITRPLATIGRGSKRRTALVLLGVWLYALAWSLPPFFGWSAYVPEGLLTSCSWDYMTFTPQVRAYTMLLFCFVFFLPLLIIIFCYIFIFRAIRETGRACEGCGESPLRQRRQWQRLQSEWKMAKVALIVILLFVLSWAPYSTVALVAFAGYSHILTPYMSSVPAVIAKASAIHNPIIYAITHPKYRVAIAQHLPCLGVLLGVSGQRSHPSLSYRSTHRSTLSSQSSDLSWISGRKRQESLGSESEVGWTDTETTAAWGAAQQASGQSFCSQNLEDGELKASSSPQVQRSKTPKVPGPSTCRPMKGQGARPSSLRGDQKGRLAVCTGLSECPHPHTSQFPLAFLEDDVTLRHL.

Over 1 to 71 the chain is Extracellular; the sequence is MDSPSGPRVL…VDVPDHAHYT (71 aa). Residues Asn30 and Asn34 are each glycosylated (N-linked (GlcNAc...) asparagine). A helical membrane pass occupies residues 72–92; the sequence is LGTVILLVGLTGMLGNLTVIY. Residues 93-106 lie on the Cytoplasmic side of the membrane; it reads TFCRNRGLRTPANM. The helical transmembrane segment at 107 to 127 threads the bilayer; sequence FIINLAVSDFLMSVTQAPVFF. Residues 128 to 143 lie on the Extracellular side of the membrane; that stretch reads ASSLYKKWLFGETGCE. The cysteines at positions 142 and 220 are disulfide-linked. The helical transmembrane segment at 144–164 threads the bilayer; that stretch reads FYAFCGAVFGITSMITLTAIA. The Cytoplasmic segment spans residues 165–187; it reads MDRYLVITRPLATIGRGSKRRTA. A helical transmembrane segment spans residues 188–208; sequence LVLLGVWLYALAWSLPPFFGW. Topologically, residues 209 to 237 are extracellular; sequence SAYVPEGLLTSCSWDYMTFTPQVRAYTML. A helical membrane pass occupies residues 238–258; it reads LFCFVFFLPLLIIIFCYIFIF. The Cytoplasmic portion of the chain corresponds to 259–293; it reads RAIRETGRACEGCGESPLRQRRQWQRLQSEWKMAK. Residues 294–314 form a helical membrane-spanning segment; sequence VALIVILLFVLSWAPYSTVAL. The Extracellular portion of the chain corresponds to 315 to 329; that stretch reads VAFAGYSHILTPYMS. The chain crosses the membrane as a helical span at residues 330–350; it reads SVPAVIAKASAIHNPIIYAIT. An N6-(retinylidene)lysine modification is found at Lys337. Residues 351 to 521 are Cytoplasmic-facing; it reads HPKYRVAIAQ…LEDDVTLRHL (171 aa). Positions 445–486 are disordered; the sequence is GELKASSSPQVQRSKTPKVPGPSTCRPMKGQGARPSSLRGDQ. The segment covering 449–458 has biased composition (polar residues); sequence ASSSPQVQRS.

Belongs to the G-protein coupled receptor 1 family. Opsin subfamily. Expressed in the retinal pigment epithelium and ganglion cell layer (at protein level). Also expressed in amacrine cell layers of the retina. Weakly expressed in vibrissae, and tail. In terms of tissue distribution, observed with processes in the outer strata of inner plexiform layer (IPL) close to the inner nuclear layer (INL) or is found to be bistratified with processes located both in the inner (ON) or outer (OFF) layers of the IPL (at protein level). A second population of isoform 1 is identified in processes which are confined to the inner layer of the IPL near to the ganglion cell layer (GCL) (at protein level). As to expression, about 40 times more abundant than isoform 1 in the retina (at protein level). Isoform 2 is involved in processes localized to the outer IPL or is bistratified with processes in both the inner and outer layers of the IPL (at protein level). Isoform 2 is absent in the processes confined only to the inner layer of the IPL (at protein level).

It is found in the cell membrane. The protein resides in the cell projection. Its subcellular location is the axon. It localises to the dendrite. The protein localises to the perikaryon. In terms of biological role, photoreceptor that binds cis-retinaldehydes. Contributes to pupillar reflex, photoentrainment and other non-image forming responses to light. May be involved in the optokinetic visual tracking response. May be involved in the regulation of retinal hyaloid vessel growth and regression. The chain is Melanopsin (Opn4) from Mus musculus (Mouse).